Here is a 365-residue protein sequence, read N- to C-terminus: MKFYEYSAKEIFRAEGISTPRGGVAETPEEAERIAAELGCDVAVKSQVLTGGRGKAGGIRFASPSGVAEVTGDLLSSEVRGETVEKVLIEEKIPIDRELYVSAVIDRTAKMPLIMASAEGGVDIEELAARSPEKIVRYHINPLDEFLPYEAREIARKMGLESELIPSVGGVIWKLYQLFRKYDARLAEINPLVISGDSVIAADAKLEVDDDSIYRHREFMEMEEYEPEEFAFVKLDGDIAVIGNGAGLTLTAMDLIKLNGEPATFLDIGGGASEDVIRRALDLVISHPSVRVVFLNVLGGITRADDVARGVVNALRDARRDVPLVIRLTGTNEEEGQRILREAGIPFETSLERAAEKAVEIAKNL.

One can recognise an ATP-grasp domain in the interval K9–F230. ATP is bound by residues K45, G52–G54, E90, I93, and E98. Residues N190 and D203 each coordinate Mg(2+). Substrate contacts are provided by residues N244 and G300–T302.

This sequence belongs to the succinate/malate CoA ligase beta subunit family. As to quaternary structure, heterotetramer of two alpha and two beta subunits. Mg(2+) serves as cofactor.

It carries out the reaction succinate + ATP + CoA = succinyl-CoA + ADP + phosphate. The enzyme catalyses GTP + succinate + CoA = succinyl-CoA + GDP + phosphate. The protein operates within carbohydrate metabolism; tricarboxylic acid cycle; succinate from succinyl-CoA (ligase route): step 1/1. Succinyl-CoA synthetase functions in the citric acid cycle (TCA), coupling the hydrolysis of succinyl-CoA to the synthesis of either ATP or GTP and thus represents the only step of substrate-level phosphorylation in the TCA. The beta subunit provides nucleotide specificity of the enzyme and binds the substrate succinate, while the binding sites for coenzyme A and phosphate are found in the alpha subunit. The polypeptide is Succinate--CoA ligase [ADP-forming] subunit beta (Methanothermobacter thermautotrophicus (strain ATCC 29096 / DSM 1053 / JCM 10044 / NBRC 100330 / Delta H) (Methanobacterium thermoautotrophicum)).